The following is a 153-amino-acid chain: Histone H2B.6 (153 aa).

Composition is skewed to basic and acidic residues over residues 1 to 28 (MAPK…EKAP) and 36 to 53 (EKRL…EGKK). The segment at 1–60 (MAPKAEKKPAAKKPAEEEPAAEKAEKAPAGKKPKAEKRLPAGKGEKGSGEGKKAGRKKGK) is disordered. N6-acetyllysine occurs at positions 7 and 37. A Glycyl lysine isopeptide (Lys-Gly) (interchain with G-Cter in ubiquitin) cross-link involves residue Lys149.

Belongs to the histone H2B family. In terms of assembly, the nucleosome is a histone octamer containing two molecules each of H2A, H2B, H3 and H4 assembled in one H3-H4 heterotetramer and two H2A-H2B heterodimers. The octamer wraps approximately 147 bp of DNA. Post-translationally, can be acetylated to form H2BK6ac and H2BK33ac. Monoubiquitinated by BRE1 to form H2BK143ub1 and deubiquitinated by UBP26. Required for heterochromatic histone H3 di- and trimethylation at H3K4me. May give a specific tag for epigenetic transcriptional activation.

It is found in the nucleus. It localises to the chromosome. In terms of biological role, core component of nucleosome. Nucleosomes wrap and compact DNA into chromatin, limiting DNA accessibility to the cellular machineries which require DNA as a template. Histones thereby play a central role in transcription regulation, DNA repair, DNA replication and chromosomal stability. DNA accessibility is regulated via a complex set of post-translational modifications of histones, also called histone code, and nucleosome remodeling. The polypeptide is Histone H2B.6 (H2B.6) (Oryza sativa subsp. japonica (Rice)).